We begin with the raw amino-acid sequence, 201 residues long: Small ribosomal subunit protein uS4c (201 aa).

Positions 89-152 (MRLDNILFRL…NSRTLVQNLL (64 aa)) constitute an S4 RNA-binding domain.

Belongs to the universal ribosomal protein uS4 family. In terms of assembly, part of the 30S ribosomal subunit. Contacts protein S5. The interaction surface between S4 and S5 is involved in control of translational fidelity.

The protein resides in the plastid. It is found in the chloroplast. One of the primary rRNA binding proteins, it binds directly to 16S rRNA where it nucleates assembly of the body of the 30S subunit. In terms of biological role, with S5 and S12 plays an important role in translational accuracy. This Olimarabidopsis pumila (Dwarf rocket) protein is Small ribosomal subunit protein uS4c (rps4).